The chain runs to 74 residues: Protein SlyX homolog (74 aa).

Belongs to the SlyX family.

In Neisseria meningitidis serogroup C / serotype 2a (strain ATCC 700532 / DSM 15464 / FAM18), this protein is Protein SlyX homolog.